The chain runs to 312 residues: Magnesium protoporphyrin IX methyltransferase, chloroplastic (312 aa).

The transit peptide at 1–39 (MPFAPSLLSSSSSVSQFLPRFPNATRFNVTPRSRAATVV) directs the protein to the chloroplast.

It belongs to the class I-like SAM-binding methyltransferase superfamily. Magnesium protoporphyrin O-methyltransferase family.

It is found in the plastid. The protein localises to the chloroplast membrane. Its subcellular location is the chloroplast thylakoid membrane. The catalysed reaction is Mg-protoporphyrin IX + S-adenosyl-L-methionine = Mg-protoporphyrin IX 13-monomethyl ester + S-adenosyl-L-homocysteine. It functions in the pathway porphyrin-containing compound metabolism; chlorophyll biosynthesis. With respect to regulation, regulated by the folate status via an increased concentration of S-adenosyl-homocysteine (AdoHcy), a potent inhibitor of most AdoMet-dependent methyltransferases. Its function is as follows. Converts Mg-protoporphyrin IX to Mg-protoporphyrin IX methylester using S-adenosyl-L-methionine as a cofactor. Involved in chloroplast-to-nucleus signaling by acting as a negative effector of nuclear photosynthetic gene expression. The sequence is that of Magnesium protoporphyrin IX methyltransferase, chloroplastic (CHLM) from Arabidopsis thaliana (Mouse-ear cress).